The primary structure comprises 445 residues: Exodeoxyribonuclease 7 large subunit (445 aa).

The protein belongs to the XseA family. In terms of assembly, heterooligomer composed of large and small subunits.

It localises to the cytoplasm. It catalyses the reaction Exonucleolytic cleavage in either 5'- to 3'- or 3'- to 5'-direction to yield nucleoside 5'-phosphates.. In terms of biological role, bidirectionally degrades single-stranded DNA into large acid-insoluble oligonucleotides, which are then degraded further into small acid-soluble oligonucleotides. This chain is Exodeoxyribonuclease 7 large subunit, found in Pasteurella multocida (strain Pm70).